A 310-amino-acid chain; its full sequence is Glycerol-3-phosphate dehydrogenase [NAD(P)+] (310 aa).

Positions 19, 39, 40, and 87 each coordinate NADPH. Sn-glycerol 3-phosphate is bound by residues K87 and G115. S119 contributes to the NADPH binding site. Positions 170, 223, 233, 234, and 235 each coordinate sn-glycerol 3-phosphate. K170 acts as the Proton acceptor in catalysis. R234 provides a ligand contact to NADPH. E260 contributes to the NADPH binding site.

This sequence belongs to the NAD-dependent glycerol-3-phosphate dehydrogenase family.

It localises to the cytoplasm. The catalysed reaction is sn-glycerol 3-phosphate + NAD(+) = dihydroxyacetone phosphate + NADH + H(+). It carries out the reaction sn-glycerol 3-phosphate + NADP(+) = dihydroxyacetone phosphate + NADPH + H(+). Its pathway is membrane lipid metabolism; glycerophospholipid metabolism. Functionally, catalyzes the reduction of the glycolytic intermediate dihydroxyacetone phosphate (DHAP) to sn-glycerol 3-phosphate (G3P), the key precursor for phospholipid synthesis. The sequence is that of Glycerol-3-phosphate dehydrogenase [NAD(P)+] from Synechococcus sp. (strain JA-3-3Ab) (Cyanobacteria bacterium Yellowstone A-Prime).